A 1028-amino-acid polypeptide reads, in one-letter code: Pentatricopeptide repeat-containing protein At3g09040, mitochondrial (1028 aa).

The N-terminal 30 residues, 1–30 (MYFRVLLTPSSAMFDSFSFVRRLSYSPDLG), are a transit peptide targeting the mitochondrion. PPR repeat units lie at residues 94–123 (EGRL…FLEK), 124–158 (DVTA…QIFP), 159–193 (NKFT…GLER), 194–224 (NSYC…IVDP), 225–259 (NTVC…GHRP), 260–290 (DHLA…MSSP), 291–325 (DVVA…SVKS), 326–360 (TRST…GLAS), 361–391 (NIYV…LEEK), 392–426 (NDVF…GYNI), 427–461 (DDFT…KLAK), 462–492 (NLFV…MCDR), 493–527 (DNVT…GIVS), 528–562 (DGAC…GLDR), 563–593 (DLHT…LPEW), 594–627 (SVVS…GVNP), 628–662 (SEIT…GFSS), 664–694 (GEYL…LSSP), 696–730 (SIVL…GVLP), 731–765 (DQAT…AHDL), 766–796 (DELT…MRRR), 798–832 (NVVS…HIMP), 833–863 (DEIT…MIGQ), and 869–899 (RVDH…QNLK). Positions 904–979 (LWSSLLGACR…VPGYSWIDVE (76 aa)) are type E motif. The segment at 980–1010 (QRTHIFAAGDKSHSEIGKIEMFLEDLYDLMK) is type E(+) motif.

Belongs to the PPR family. PCMP-E subfamily.

The protein resides in the mitochondrion. The sequence is that of Pentatricopeptide repeat-containing protein At3g09040, mitochondrial (PCMP-E88) from Arabidopsis thaliana (Mouse-ear cress).